We begin with the raw amino-acid sequence, 285 residues long: Pantothenate synthetase (285 aa).

30–37 (MGFLHEGH) contacts ATP. The active-site Proton donor is His37. Gln61 contributes to the (R)-pantoate binding site. Residue Gln61 coordinates beta-alanine. 147 to 150 (GQKD) provides a ligand contact to ATP. Residue Gln153 participates in (R)-pantoate binding. Residues Val176 and 184 to 187 (KSSR) contribute to the ATP site.

Belongs to the pantothenate synthetase family. Homodimer.

The protein localises to the cytoplasm. The enzyme catalyses (R)-pantoate + beta-alanine + ATP = (R)-pantothenate + AMP + diphosphate + H(+). The protein operates within cofactor biosynthesis; (R)-pantothenate biosynthesis; (R)-pantothenate from (R)-pantoate and beta-alanine: step 1/1. Its function is as follows. Catalyzes the condensation of pantoate with beta-alanine in an ATP-dependent reaction via a pantoyl-adenylate intermediate. The sequence is that of Pantothenate synthetase from Listeria innocua serovar 6a (strain ATCC BAA-680 / CLIP 11262).